Consider the following 414-residue polypeptide: DNA primase small subunit PriS (414 aa).

Residues Asp98, Asp100, and Asp312 contribute to the active site.

This sequence belongs to the eukaryotic-type primase small subunit family. In terms of assembly, heterodimer of a small subunit (PriS) and a large subunit (PriL). Mg(2+) serves as cofactor. The cofactor is Mn(2+).

Functionally, catalytic subunit of DNA primase, an RNA polymerase that catalyzes the synthesis of short RNA molecules used as primers for DNA polymerase during DNA replication. The small subunit contains the primase catalytic core and has DNA synthesis activity on its own. Binding to the large subunit stabilizes and modulates the activity, increasing the rate of DNA synthesis while decreasing the length of the DNA fragments, and conferring RNA synthesis capability. The DNA polymerase activity may enable DNA primase to also catalyze primer extension after primer synthesis. May also play a role in DNA repair. This is DNA primase small subunit PriS from Methanosarcina acetivorans (strain ATCC 35395 / DSM 2834 / JCM 12185 / C2A).